We begin with the raw amino-acid sequence, 248 residues long: 2,3-bisphosphoglycerate-dependent phosphoglycerate mutase (248 aa).

Residues 8-15 (RHGESTWN), 21-22 (TG), Arg-60, 87-90 (ERHY), Lys-98, and 114-115 (RR) contribute to the substrate site. His-9 (tele-phosphohistidine intermediate) is an active-site residue. Residue Glu-87 is the Proton donor/acceptor of the active site. Positions 118–137 (DTPPPALEPTDPRASYDDPR) are disordered. Over residues 127–137 (TDPRASYDDPR) the composition is skewed to basic and acidic residues. 183-184 (GN) serves as a coordination point for substrate.

The protein belongs to the phosphoglycerate mutase family. BPG-dependent PGAM subfamily. In terms of assembly, homodimer.

It catalyses the reaction (2R)-2-phosphoglycerate = (2R)-3-phosphoglycerate. The protein operates within carbohydrate degradation; glycolysis; pyruvate from D-glyceraldehyde 3-phosphate: step 3/5. Functionally, catalyzes the interconversion of 2-phosphoglycerate and 3-phosphoglycerate. The protein is 2,3-bisphosphoglycerate-dependent phosphoglycerate mutase of Cupriavidus necator (strain ATCC 17699 / DSM 428 / KCTC 22496 / NCIMB 10442 / H16 / Stanier 337) (Ralstonia eutropha).